The primary structure comprises 269 residues: Pyrroline-5-carboxylate reductase (269 aa).

This sequence belongs to the pyrroline-5-carboxylate reductase family.

The protein resides in the cytoplasm. It carries out the reaction L-proline + NADP(+) = (S)-1-pyrroline-5-carboxylate + NADPH + 2 H(+). The catalysed reaction is L-proline + NAD(+) = (S)-1-pyrroline-5-carboxylate + NADH + 2 H(+). It participates in amino-acid biosynthesis; L-proline biosynthesis; L-proline from L-glutamate 5-semialdehyde: step 1/1. Inhibited by p-chloromercuribenzoate. In terms of biological role, catalyzes the reduction of 1-pyrroline-5-carboxylate (PCA) to L-proline. Does not catalyze the reverse reaction. This chain is Pyrroline-5-carboxylate reductase, found in Escherichia coli (strain K12).